The primary structure comprises 827 residues: Putative transcriptional regulatory protein C16G5.16 (827 aa).

The segment at residues 16-42 (CDECHRRKIKCDQRRPCSNCIAYNYEC) is a DNA-binding region (zn(2)-C6 fungal-type). Disordered stretches follow at residues 80-114 (LKLP…SSQD), 158-193 (TVPN…HKKP), and 794-827 (QPPS…KRTE). Positions 102 to 112 (KRSDSSKRSSS) are enriched in basic and acidic residues. At Ser-112 the chain carries Phosphoserine. Composition is skewed to low complexity over residues 159–179 (VPNP…LSFP) and 811–827 (SNNS…KRTE).

This sequence belongs to the ASG1 family.

It localises to the cytoplasm. Its subcellular location is the nucleus. The protein is Putative transcriptional regulatory protein C16G5.16 of Schizosaccharomyces pombe (strain 972 / ATCC 24843) (Fission yeast).